A 145-amino-acid polypeptide reads, in one-letter code: Large ribosomal subunit protein uL15 (145 aa).

The disordered stretch occupies residues 1–57; the sequence is MKLNDLSPAPGSRREKHRPGRGIGSGLGKTGGRGHKGQTSRSGGTIAPGFEGGQQPL. The span at 21–31 shows a compositional bias: gly residues; the sequence is RGIGSGLGKTG.

Belongs to the universal ribosomal protein uL15 family. Part of the 50S ribosomal subunit.

Functionally, binds to the 23S rRNA. The sequence is that of Large ribosomal subunit protein uL15 from Pseudomonas fluorescens (strain Pf0-1).